Reading from the N-terminus, the 626-residue chain is Leucine aminopeptidase 2-1 (626 aa).

Substrate is bound by residues 134-136 and 259-264; these read QCQ and PYGGME. H288 provides a ligand contact to Zn(2+). Catalysis depends on E289, which acts as the Proton acceptor. Residues H292 and E311 each coordinate Zn(2+). Catalysis depends on Y389, which acts as the Proton donor.

Belongs to the peptidase M1 family. Zn(2+) is required as a cofactor.

The protein localises to the cytoplasm. The protein resides in the nucleus. It carries out the reaction an epoxide + H2O = an ethanediol. Functionally, aminopeptidase that preferentially cleaves di- and tripeptides. Also has low epoxide hydrolase activity (in vitro). Can hydrolyze the epoxide leukotriene LTA(4) but it forms preferentially 5,6-dihydroxy-7,9,11,14-eicosatetraenoic acid rather than the cytokine leukotriene B(4) as the product compared to the homologous mammalian enzyme (in vitro). The sequence is that of Leucine aminopeptidase 2-1 (LKA4) from Scheffersomyces stipitis (strain ATCC 58785 / CBS 6054 / NBRC 10063 / NRRL Y-11545) (Yeast).